We begin with the raw amino-acid sequence, 141 residues long: ATP synthase epsilon chain 1 (141 aa).

It belongs to the ATPase epsilon chain family. F-type ATPases have 2 components, CF(1) - the catalytic core - and CF(0) - the membrane proton channel. CF(1) has five subunits: alpha(3), beta(3), gamma(1), delta(1), epsilon(1). CF(0) has three main subunits: a, b and c.

It is found in the cell inner membrane. In terms of biological role, produces ATP from ADP in the presence of a proton gradient across the membrane. The protein is ATP synthase epsilon chain 1 of Paraburkholderia xenovorans (strain LB400).